Reading from the N-terminus, the 54-residue chain is Large ribosomal subunit protein bL33 (54 aa).

It belongs to the bacterial ribosomal protein bL33 family.

This chain is Large ribosomal subunit protein bL33, found in Symbiobacterium thermophilum (strain DSM 24528 / JCM 14929 / IAM 14863 / T).